Consider the following 239-residue polypeptide: Venom nerve growth factor (239 aa).

A signal peptide spans 1–18 (MSMLCYTLIIAFLIGIWA). Residues 19 to 125 (APKSEDNVPL…ALNRNIQAKR (107 aa)) constitute a propeptide that is removed on maturation. The span at 47–66 (GLKTSRNTDQRHPAPKKADD) shows a compositional bias: basic and acidic residues. The disordered stretch occupies residues 47 to 68 (GLKTSRNTDQRHPAPKKADDQE). Intrachain disulfides connect Cys-139-Cys-203, Cys-181-Cys-231, and Cys-191-Cys-233.

It belongs to the NGF-beta family. Homodimer; non-covalently linked. In terms of tissue distribution, expressed by the venom gland.

Its subcellular location is the secreted. Nerve growth factor is important for the development and maintenance of the sympathetic and sensory nervous systems. It stimulates division and differentiation of sympathetic and embryonic sensory neurons as well as basal forebrain cholinergic neurons in the brain. Its relevance in the snake venom is not clear. However, it has been shown to inhibit metalloproteinase-dependent proteolysis of platelet glycoprotein Ib alpha, suggesting a metalloproteinase inhibition to prevent metalloprotease autodigestion and/or protection against prey proteases. Binds a lipid between the two protein chains in the homodimer. The lipid-bound form promotes histamine relase from mouse mast cells, contrary to the lipid-free form. The polypeptide is Venom nerve growth factor (Pseudechis porphyriacus (Red-bellied black snake)).